The following is a 160-amino-acid chain: Large ribosomal subunit protein eL21 (160 aa).

Belongs to the eukaryotic ribosomal protein eL21 family.

This is Large ribosomal subunit protein eL21 (rpl21) from Dictyostelium discoideum (Social amoeba).